Here is a 234-residue protein sequence, read N- to C-terminus: Adenosine 5'-phosphosulfate reductase (234 aa).

[4Fe-4S] cluster is bound by residues C120, C121, C203, and C206. The active-site Nucleophile; cysteine thiosulfonate intermediate is the C229.

This sequence belongs to the PAPS reductase family. CysH subfamily. [4Fe-4S] cluster serves as cofactor.

Its subcellular location is the cytoplasm. The enzyme catalyses [thioredoxin]-disulfide + sulfite + AMP + 2 H(+) = adenosine 5'-phosphosulfate + [thioredoxin]-dithiol. The protein operates within sulfur metabolism; hydrogen sulfide biosynthesis; sulfite from sulfate. Functionally, catalyzes the formation of sulfite from adenosine 5'-phosphosulfate (APS) using thioredoxin as an electron donor. The chain is Adenosine 5'-phosphosulfate reductase from Bacillus cereus (strain AH187).